The chain runs to 268 residues: MERYESLFAQLKERKEGAFVPFVTLGDPGIEQSLKIIDTLIEAGADALELGIPFSDPLADGPTIQNATLRAFAAGVTPAQCFEMLALIRQKHPTIPIGLLMYANLVFSKGIDEFYAQCEKVGVDSVLVADVPVEESAPFRQAALRHNVAPIFICPPNADDDLLRQIASYGRGYTYLLSRAGVTGAENRAALPLNHLVTKLKEYNAAPPLQGFGISAPDQVKAAIDAGAAGAISGSAIVKIIEQHINEPEKMLVALKAFVQPMKAATRS.

Residues Glu49 and Asp60 each act as proton acceptor in the active site.

The protein belongs to the TrpA family. As to quaternary structure, tetramer of two alpha and two beta chains.

It carries out the reaction (1S,2R)-1-C-(indol-3-yl)glycerol 3-phosphate + L-serine = D-glyceraldehyde 3-phosphate + L-tryptophan + H2O. Its pathway is amino-acid biosynthesis; L-tryptophan biosynthesis; L-tryptophan from chorismate: step 5/5. The alpha subunit is responsible for the aldol cleavage of indoleglycerol phosphate to indole and glyceraldehyde 3-phosphate. The chain is Tryptophan synthase alpha chain from Escherichia coli O17:K52:H18 (strain UMN026 / ExPEC).